We begin with the raw amino-acid sequence, 635 residues long: Cationic amino acid transporter 4 (635 aa).

Helical transmembrane passes span Leu42 to Val62, Val66 to Ala86, and Leu113 to Val133. 2 N-linked (GlcNAc...) asparagine glycosylation sites follow: Asn151 and Asn195. Residues Thr197–Ala217 traverse the membrane as a helical segment. Residue Asn221 is glycosylated (N-linked (GlcNAc...) asparagine). The next 5 membrane-spanning stretches (helical) occupy residues Phe229–Val249, Leu270–Leu290, Gly318–Phe338, Gln365–Leu385, and Val391–Val411. Ser422 and Ser427 each carry phosphoserine. The chain crosses the membrane as a helical span at residues Val478–Phe498. N-linked (GlcNAc...) asparagine glycosylation is present at Asn500. The next 3 membrane-spanning stretches (helical) occupy residues Trp508 to Leu528, Leu539 to Leu559, and Thr567 to Ile587. Asn601 carries N-linked (GlcNAc...) asparagine glycosylation.

It belongs to the amino acid-polyamine-organocation (APC) superfamily. Cationic amino acid transporter (CAT) (TC 2.A.3.3) family.

The protein localises to the membrane. Involved in the transport of the cationic amino acids (arginine, lysine and ornithine). This is Cationic amino acid transporter 4 (SLC7A4) from Homo sapiens (Human).